Here is a 591-residue protein sequence, read N- to C-terminus: DNA ligase (591 aa).

NAD(+)-binding positions include 38 to 42 (DEKYD), 87 to 88 (SL), and Glu-119. The active-site N6-AMP-lysine intermediate is the Lys-121. Positions 142, 181, 298, and 322 each coordinate NAD(+). Residues Cys-415, Cys-418, Cys-433, and Cys-439 each contribute to the Zn(2+) site.

This sequence belongs to the NAD-dependent DNA ligase family. LigA subfamily. It depends on Mg(2+) as a cofactor. The cofactor is Mn(2+).

The catalysed reaction is NAD(+) + (deoxyribonucleotide)n-3'-hydroxyl + 5'-phospho-(deoxyribonucleotide)m = (deoxyribonucleotide)n+m + AMP + beta-nicotinamide D-nucleotide.. DNA ligase that catalyzes the formation of phosphodiester linkages between 5'-phosphoryl and 3'-hydroxyl groups in double-stranded DNA using NAD as a coenzyme and as the energy source for the reaction. It is essential for DNA replication and repair of damaged DNA. The polypeptide is DNA ligase (Wigglesworthia glossinidia brevipalpis).